The following is a 78-amino-acid chain: MANIKSAIKRAELNVKHNEKNSAQKSAMRTAIKAFEANPSEELFRAASSAIDKAETKGLIHKNKASRDKARLSAKLAK.

It belongs to the bacterial ribosomal protein bS20 family.

Functionally, binds directly to 16S ribosomal RNA. This Streptococcus sanguinis (strain SK36) protein is Small ribosomal subunit protein bS20.